The primary structure comprises 937 residues: Aconitate hydratase A (937 aa).

Cys-439, Cys-505, and Cys-508 together coordinate [4Fe-4S] cluster. Residues 898–921 (KKESKSTQSTTSKGCGSADTSSET) form a disordered region.

The protein belongs to the aconitase/IPM isomerase family. Monomer. It depends on [4Fe-4S] cluster as a cofactor.

The catalysed reaction is citrate = D-threo-isocitrate. It catalyses the reaction (2S,3R)-3-hydroxybutane-1,2,3-tricarboxylate = 2-methyl-cis-aconitate + H2O. The protein operates within carbohydrate metabolism; tricarboxylic acid cycle; isocitrate from oxaloacetate: step 2/2. Its pathway is organic acid metabolism; propanoate degradation. Its function is as follows. Involved in the catabolism of short chain fatty acids (SCFA) via the tricarboxylic acid (TCA)(acetyl degradation route) and probably the 2-methylcitrate cycle I (propionate degradation route). Catalyzes the reversible isomerization of citrate to isocitrate via cis-aconitate. Could catalyze the hydration of 2-methyl-cis-aconitate to yield (2R,3S)-2-methylisocitrate. The apo form of AcnA functions as a RNA-binding regulatory protein. This chain is Aconitate hydratase A (acn), found in Francisella tularensis subsp. holarctica (strain LVS).